The sequence spans 324 residues: Holliday junction branch migration complex subunit RuvB (324 aa).

Residues 1-180 form a large ATPase domain (RuvB-L) region; that stretch reads MKSISCGKEY…FGIPLHLEFY (180 aa). Residues Ile19, Arg20, Gly61, Lys64, Thr65, Thr66, 127-129, Arg170, Tyr180, and Arg217 contribute to the ATP site; that span reads EDF. Residue Thr65 participates in Mg(2+) binding. The interval 181 to 251 is small ATPAse domain (RuvB-S); that stretch reads SFEELVNIIK…VADSVLLKLG (71 aa). Positions 254–324 are head domain (RuvB-H); that stretch reads KMGLNKLDMN…TDQAKEYLSL (71 aa). Positions 307 and 312 each coordinate DNA.

It belongs to the RuvB family. Homohexamer. Forms an RuvA(8)-RuvB(12)-Holliday junction (HJ) complex. HJ DNA is sandwiched between 2 RuvA tetramers; dsDNA enters through RuvA and exits via RuvB. An RuvB hexamer assembles on each DNA strand where it exits the tetramer. Each RuvB hexamer is contacted by two RuvA subunits (via domain III) on 2 adjacent RuvB subunits; this complex drives branch migration. In the full resolvosome a probable DNA-RuvA(4)-RuvB(12)-RuvC(2) complex forms which resolves the HJ.

The protein resides in the cytoplasm. It catalyses the reaction ATP + H2O = ADP + phosphate + H(+). The RuvA-RuvB-RuvC complex processes Holliday junction (HJ) DNA during genetic recombination and DNA repair, while the RuvA-RuvB complex plays an important role in the rescue of blocked DNA replication forks via replication fork reversal (RFR). RuvA specifically binds to HJ cruciform DNA, conferring on it an open structure. The RuvB hexamer acts as an ATP-dependent pump, pulling dsDNA into and through the RuvAB complex. RuvB forms 2 homohexamers on either side of HJ DNA bound by 1 or 2 RuvA tetramers; 4 subunits per hexamer contact DNA at a time. Coordinated motions by a converter formed by DNA-disengaged RuvB subunits stimulates ATP hydrolysis and nucleotide exchange. Immobilization of the converter enables RuvB to convert the ATP-contained energy into a lever motion, pulling 2 nucleotides of DNA out of the RuvA tetramer per ATP hydrolyzed, thus driving DNA branch migration. The RuvB motors rotate together with the DNA substrate, which together with the progressing nucleotide cycle form the mechanistic basis for DNA recombination by continuous HJ branch migration. Branch migration allows RuvC to scan DNA until it finds its consensus sequence, where it cleaves and resolves cruciform DNA. The protein is Holliday junction branch migration complex subunit RuvB of Wolbachia sp. subsp. Drosophila simulans (strain wRi).